We begin with the raw amino-acid sequence, 221 residues long: Hypoxanthine-guanine phosphoribosyltransferase (221 aa).

Residue S2 is modified to N-acetylserine. GMP-binding positions include K85, 110-118, K159, and 188-194; these read DEVDDTRTT and WYAYPWE. D114 serves as the catalytic Proton acceptor.

Belongs to the purine/pyrimidine phosphoribosyltransferase family. In terms of assembly, dimer. Mg(2+) is required as a cofactor.

The protein resides in the cytoplasm. It localises to the nucleus. It catalyses the reaction IMP + diphosphate = hypoxanthine + 5-phospho-alpha-D-ribose 1-diphosphate. The catalysed reaction is GMP + diphosphate = guanine + 5-phospho-alpha-D-ribose 1-diphosphate. Its pathway is purine metabolism; IMP biosynthesis via salvage pathway; IMP from hypoxanthine: step 1/1. Subject to feedback inhibition by GMP. Functionally, converts guanine to guanosine monophosphate, and hypoxanthine to inosine monophosphate. Transfers the 5-phosphoribosyl group from 5-phosphoribosylpyrophosphate onto the purine. Plays a central role in the generation of purine nucleotides through the purine salvage pathway. This Saccharomyces cerevisiae (strain ATCC 204508 / S288c) (Baker's yeast) protein is Hypoxanthine-guanine phosphoribosyltransferase (HPT1).